We begin with the raw amino-acid sequence, 550 residues long: Glucose-6-phosphate isomerase (550 aa).

D-glucose 6-phosphate contacts are provided by residues 163–164, 214–219, Q358, E362, H393, and K515; these read GS and SKTFTT. E362 acts as the Proton donor in catalysis. Active-site residues include H393 and K515.

It belongs to the GPI family. As to quaternary structure, homodimer.

The protein resides in the cytoplasm. It catalyses the reaction alpha-D-glucose 6-phosphate = beta-D-fructose 6-phosphate. Its pathway is carbohydrate degradation; glycolysis; D-glyceraldehyde 3-phosphate and glycerone phosphate from D-glucose: step 2/4. Its function is as follows. In the cytoplasm, catalyzes the conversion of glucose-6-phosphate to fructose-6-phosphate, the second step in glycolysis, and the reverse reaction during gluconeogenesis. The protein is Glucose-6-phosphate isomerase (PGI1) of Candida albicans (strain SC5314 / ATCC MYA-2876) (Yeast).